Reading from the N-terminus, the 386-residue chain is Formate-dependent phosphoribosylglycinamide formyltransferase (386 aa).

N(1)-(5-phospho-beta-D-ribosyl)glycinamide-binding positions include 15–16 and Glu-75; that span reads EL. Residues Arg-107, Lys-148, 153 to 158, 188 to 191, and Glu-196 contribute to the ATP site; these read SSGKGQ and EQFI. Residues 112–301 form the ATP-grasp domain; that stretch reads ALAAQQLNLQ…EFELHLRAIV (190 aa). Glu-260 and Glu-272 together coordinate Mg(2+). Residues Asp-279, Lys-349, and 356–357 each bind N(1)-(5-phospho-beta-D-ribosyl)glycinamide; that span reads RR.

It belongs to the PurK/PurT family. Homodimer.

The enzyme catalyses N(1)-(5-phospho-beta-D-ribosyl)glycinamide + formate + ATP = N(2)-formyl-N(1)-(5-phospho-beta-D-ribosyl)glycinamide + ADP + phosphate + H(+). It functions in the pathway purine metabolism; IMP biosynthesis via de novo pathway; N(2)-formyl-N(1)-(5-phospho-D-ribosyl)glycinamide from N(1)-(5-phospho-D-ribosyl)glycinamide (formate route): step 1/1. In terms of biological role, involved in the de novo purine biosynthesis. Catalyzes the transfer of formate to 5-phospho-ribosyl-glycinamide (GAR), producing 5-phospho-ribosyl-N-formylglycinamide (FGAR). Formate is provided by PurU via hydrolysis of 10-formyl-tetrahydrofolate. The polypeptide is Formate-dependent phosphoribosylglycinamide formyltransferase (Francisella tularensis subsp. tularensis (strain SCHU S4 / Schu 4)).